Reading from the N-terminus, the 529-residue chain is Peptide chain release factor 3 (529 aa).

Positions 11–280 (ATRRTFAIIS…GLVQWAPPPQ (270 aa)) constitute a tr-type G domain. GTP contacts are provided by residues 20–27 (SHPDAGKT), 88–92 (DTPGH), and 142–145 (NKLD).

This sequence belongs to the TRAFAC class translation factor GTPase superfamily. Classic translation factor GTPase family. PrfC subfamily.

The protein resides in the cytoplasm. In terms of biological role, increases the formation of ribosomal termination complexes and stimulates activities of RF-1 and RF-2. It binds guanine nucleotides and has strong preference for UGA stop codons. It may interact directly with the ribosome. The stimulation of RF-1 and RF-2 is significantly reduced by GTP and GDP, but not by GMP. The polypeptide is Peptide chain release factor 3 (Alcanivorax borkumensis (strain ATCC 700651 / DSM 11573 / NCIMB 13689 / SK2)).